The primary structure comprises 220 residues: UPF0319 protein Asuc_1002 (220 aa).

An N-terminal signal peptide occupies residues 1-21 (MKFRLAAVAAAALLASSASFA).

This sequence belongs to the UPF0319 family.

This chain is UPF0319 protein Asuc_1002, found in Actinobacillus succinogenes (strain ATCC 55618 / DSM 22257 / CCUG 43843 / 130Z).